We begin with the raw amino-acid sequence, 514 residues long: CBL-interacting protein kinase 25 (514 aa).

A Protein kinase domain is found at 21–281; that stretch reads YEFGPLVGEG…IPEIMEMRWF (261 aa). ATP is bound by residues 27–35 and lysine 50; that span reads VGEGNFAKV. The Proton acceptor role is filled by aspartate 149. Positions 167-196 are activation loop; that stretch reads DFGLSALADMERREAHLQTVCGTPLFLAPE. The interval 303–340 is disordered; it reads GLDGEPELYDSDTDTIESSSSSESPTPVAGTPRGMHTS. The segment covering 304 to 317 has biased composition (acidic residues); it reads LDGEPELYDSDTDT. Positions 318-329 are enriched in low complexity; it reads IESSSSSESPTP. Residues 323 to 395 enclose the NAF domain; that stretch reads SSESPTPVAG…PSFDLSGLFE (73 aa). The PPI stretch occupies residues 398 to 427; that stretch reads GERMRFVSGAPVADIIAKLQEIAGMVSFTA.

It belongs to the protein kinase superfamily. CAMK Ser/Thr protein kinase family. SNF1 subfamily. Mn(2+) serves as cofactor.

The enzyme catalyses L-seryl-[protein] + ATP = O-phospho-L-seryl-[protein] + ADP + H(+). It catalyses the reaction L-threonyl-[protein] + ATP = O-phospho-L-threonyl-[protein] + ADP + H(+). Its function is as follows. CIPK serine-threonine protein kinases interact with CBL proteins. Binding of a CBL protein to the regulatory NAF domain of CIPK protein lead to the activation of the kinase in a calcium-dependent manner. The protein is CBL-interacting protein kinase 25 (CIPK25) of Oryza sativa subsp. japonica (Rice).